A 563-amino-acid chain; its full sequence is Light-independent protochlorophyllide reductase subunit B (563 aa).

Residue D36 participates in [4Fe-4S] cluster binding. D349 acts as the Proton donor in catalysis. Position 484–485 (484–485 (GM)) interacts with substrate.

The protein belongs to the ChlB/BchB/BchZ family. As to quaternary structure, protochlorophyllide reductase is composed of three subunits; ChlL, ChlN and ChlB. Forms a heterotetramer of two ChlB and two ChlN subunits. Requires [4Fe-4S] cluster as cofactor.

Its subcellular location is the plastid. The protein localises to the chloroplast. It catalyses the reaction chlorophyllide a + oxidized 2[4Fe-4S]-[ferredoxin] + 2 ADP + 2 phosphate = protochlorophyllide a + reduced 2[4Fe-4S]-[ferredoxin] + 2 ATP + 2 H2O. Its pathway is porphyrin-containing compound metabolism; chlorophyll biosynthesis (light-independent). In terms of biological role, component of the dark-operative protochlorophyllide reductase (DPOR) that uses Mg-ATP and reduced ferredoxin to reduce ring D of protochlorophyllide (Pchlide) to form chlorophyllide a (Chlide). This reaction is light-independent. The NB-protein (ChlN-ChlB) is the catalytic component of the complex. In Chlamydomonas moewusii (Chlamydomonas eugametos), this protein is Light-independent protochlorophyllide reductase subunit B.